The primary structure comprises 43 residues: Protein PsbN (43 aa).

The chain crosses the membrane as a helical span at residues 4–24; that stretch reads AIVLSISMAAVVVAITGISIY.

The protein belongs to the PsbN family.

It localises to the cellular thylakoid membrane. Functionally, may play a role in photosystem I and II biogenesis. The chain is Protein PsbN from Nostoc punctiforme (strain ATCC 29133 / PCC 73102).